Reading from the N-terminus, the 110-residue chain is Large ribosomal subunit protein uL22 (110 aa).

It belongs to the universal ribosomal protein uL22 family. As to quaternary structure, part of the 50S ribosomal subunit.

Functionally, this protein binds specifically to 23S rRNA; its binding is stimulated by other ribosomal proteins, e.g. L4, L17, and L20. It is important during the early stages of 50S assembly. It makes multiple contacts with different domains of the 23S rRNA in the assembled 50S subunit and ribosome. The globular domain of the protein is located near the polypeptide exit tunnel on the outside of the subunit, while an extended beta-hairpin is found that lines the wall of the exit tunnel in the center of the 70S ribosome. This Solidesulfovibrio magneticus (strain ATCC 700980 / DSM 13731 / RS-1) (Desulfovibrio magneticus) protein is Large ribosomal subunit protein uL22.